A 911-amino-acid chain; its full sequence is Nitrate reductase [NADH] (911 aa).

Residues 1-10 (MAASVENRQY) show a composition bias toward polar residues. Residues 1–71 (MAASVENRQY…SEDEDDDDEK (71 aa)) form a disordered region. Acidic residues predominate over residues 61-71 (SSEDEDDDDEK). Position 188 (C188) interacts with Mo-molybdopterin. The Cytochrome b5 heme-binding domain occupies 536–611 (SKMYSMSEVR…LEDFRIGELI (76 aa)). Residues H571 and H594 each contribute to the heme site. The FAD-binding FR-type domain occupies 654–766 (REKIPCKLVD…KGPLGHIEYQ (113 aa)). FAD is bound by residues 706-709 (RAYT), 723-727 (VVKIY), F728, F735, 740-742 (QMS), and T793.

This sequence belongs to the nitrate reductase family. Homodimer. It depends on FAD as a cofactor. Heme serves as cofactor. Mo-molybdopterin is required as a cofactor.

The enzyme catalyses nitrite + NAD(+) + H2O = nitrate + NADH + H(+). In terms of biological role, nitrate reductase is a key enzyme involved in the first step of nitrate assimilation in plants, fungi and bacteria. The sequence is that of Nitrate reductase [NADH] (NIA) from Solanum lycopersicum (Tomato).